Consider the following 256-residue polypeptide: Large ribosomal subunit protein uL2 (256 aa).

A disordered region spans residues 208-230; the sequence is EHPHGGGNHQHIGKASTVKRGTS.

It belongs to the universal ribosomal protein uL2 family. In terms of tissue distribution, in larvae tissues examined: gut, brain imaginal disk, salivary glands, fat body, muscles, epidermis and trachaea.

The protein localises to the cytoplasm. The sequence is that of Large ribosomal subunit protein uL2 (RpL8) from Drosophila melanogaster (Fruit fly).